We begin with the raw amino-acid sequence, 185 residues long: CASP-like protein 2C2 (185 aa).

The Cytoplasmic portion of the chain corresponds to 1–22; that stretch reads MAAAARVSEVKAEGLLRGACTA. The helical transmembrane segment at 23 to 43 threads the bilayer; it reads LAAAAALLVGLSTQTETVLLV. Topologically, residues 44 to 53 are extracellular; it reads RKKATVKDVQ. A helical transmembrane segment spans residues 54–74; the sequence is ALWVLAMAAAAAAGYHLLQLL. Residues 75–104 are Cytoplasmic-facing; sequence KCLYLGRVGGARPCRRSSRALAWTCLLLDK. The chain crosses the membrane as a helical span at residues 105 to 125; it reads ACAYTTFATTVAAAQACVVAL. Over 126-146 the chain is Extracellular; the sequence is DGAHALQWTKLCNIYTRFCEQ. Residues 147 to 167 form a helical membrane-spanning segment; the sequence is VAGSLVLGMLAAVGTAVLSAA. At 168 to 185 the chain is on the cytoplasmic side; it reads SARNVFRHYASLETYAAH.

The protein belongs to the Casparian strip membrane proteins (CASP) family. Homodimer and heterodimers.

The protein resides in the cell membrane. In Zea mays (Maize), this protein is CASP-like protein 2C2.